A 237-amino-acid polypeptide reads, in one-letter code: Class B acid phosphatase (237 aa).

The N-terminal stretch at 1-23 (MRKVTLVFSAIAFAFSLNGVVQA) is a signal peptide. D69 serves as the catalytic Nucleophile. D69 and D71 together coordinate Mg(2+). D71 functions as the Proton donor in the catalytic mechanism. Substrate contacts are provided by residues 137-138 (TG) and K177. D192 is a Mg(2+) binding site.

This sequence belongs to the class B bacterial acid phosphatase family. In terms of assembly, homotetramer. The cofactor is Mg(2+).

The protein localises to the periplasm. It catalyses the reaction a phosphate monoester + H2O = an alcohol + phosphate. Functionally, dephosphorylates several organic phosphate monoesters. Also has a phosphotransferase activity catalyzing the transfer of low-energy phosphate groups from organic phosphate monoesters to free hydroxyl groups of various organic compounds. The protein is Class B acid phosphatase of Xenorhabdus bovienii (strain SS-2004) (Xenorhabdus nematophila subsp. bovienii).